Reading from the N-terminus, the 428-residue chain is 3-phosphoshikimate 1-carboxyvinyltransferase (428 aa).

3-phosphoshikimate-binding residues include Lys-22, Ser-23, and Arg-27. Position 22 (Lys-22) interacts with phosphoenolpyruvate. Phosphoenolpyruvate is bound by residues Gly-95 and Arg-123. Positions 170, 171, 172, 197, 316, and 343 each coordinate 3-phosphoshikimate. Gln-172 serves as a coordination point for phosphoenolpyruvate. The active-site Proton acceptor is the Asp-316. Phosphoenolpyruvate contacts are provided by Arg-347, Arg-390, and Lys-414.

It belongs to the EPSP synthase family. In terms of assembly, monomer.

It localises to the cytoplasm. It carries out the reaction 3-phosphoshikimate + phosphoenolpyruvate = 5-O-(1-carboxyvinyl)-3-phosphoshikimate + phosphate. Its pathway is metabolic intermediate biosynthesis; chorismate biosynthesis; chorismate from D-erythrose 4-phosphate and phosphoenolpyruvate: step 6/7. Functionally, catalyzes the transfer of the enolpyruvyl moiety of phosphoenolpyruvate (PEP) to the 5-hydroxyl of shikimate-3-phosphate (S3P) to produce enolpyruvyl shikimate-3-phosphate and inorganic phosphate. The polypeptide is 3-phosphoshikimate 1-carboxyvinyltransferase (Laribacter hongkongensis (strain HLHK9)).